Here is a 418-residue protein sequence, read N- to C-terminus: Histidine--tRNA ligase (418 aa).

Belongs to the class-II aminoacyl-tRNA synthetase family. Homodimer.

The protein localises to the cytoplasm. The enzyme catalyses tRNA(His) + L-histidine + ATP = L-histidyl-tRNA(His) + AMP + diphosphate + H(+). The sequence is that of Histidine--tRNA ligase from Thermosipho africanus (strain TCF52B).